Consider the following 475-residue polypeptide: 3-isopropylmalate dehydratase large subunit 1 (475 aa).

3 residues coordinate [4Fe-4S] cluster: cysteine 353, cysteine 413, and cysteine 416.

The protein belongs to the aconitase/IPM isomerase family. LeuC type 1 subfamily. Heterodimer of LeuC and LeuD. Requires [4Fe-4S] cluster as cofactor.

The catalysed reaction is (2R,3S)-3-isopropylmalate = (2S)-2-isopropylmalate. The protein operates within amino-acid biosynthesis; L-leucine biosynthesis; L-leucine from 3-methyl-2-oxobutanoate: step 2/4. Its function is as follows. Catalyzes the isomerization between 2-isopropylmalate and 3-isopropylmalate, via the formation of 2-isopropylmaleate. The polypeptide is 3-isopropylmalate dehydratase large subunit 1 (Mannheimia succiniciproducens (strain KCTC 0769BP / MBEL55E)).